Here is a 339-residue protein sequence, read N- to C-terminus: Annexin A2 (339 aa).

The residue at position 2 (Ser2) is an N-acetylserine. An S100A10-binding site region spans residues 2–24; it reads STVHEILCKLSLEGDHSTPPSAY. Position 24 is a phosphotyrosine; by SRC (Tyr24). Residue Ser26 is modified to Phosphoserine; by PKC. Annexin repeat units follow at residues 33–104 and 105–176; these read FDAE…GLLK and TPAQ…ALAK. Lys49 is subject to N6-acetyllysine; alternate. Lys49 participates in a covalent cross-link: Glycyl lysine isopeptide (Lys-Gly) (interchain with G-Cter in SUMO1); alternate. Residue Lys49 forms a Glycyl lysine isopeptide (Lys-Gly) (interchain with G-Cter in SUMO2); alternate linkage. Lys152 bears the N6-acetyllysine mark. Ser184 is subject to Phosphoserine. Annexin repeat units lie at residues 189 to 261 and 265 to 336; these read ELID…NLVQ and NKPL…YLCG. Tyr199 is subject to Phosphotyrosine. N6-acetyllysine is present on Lys227.

Belongs to the annexin family. In terms of assembly, heterotetramer containing 2 light chains of S100A10/p11 and 2 heavy chains of ANXA2/p36. Interacts with ATP1B1. Interacts with DYSF. Interacts with COCH. Interacts (via repeat Annexin 1) with PCSK9 (via the C-terminal domain); the interaction inhibits the degradation of LDLR. Interacts with CEACAM1 (via the cytoplasmic domain); this interaction is regulated by phosphorylation of CEACAM1. Interacts with APPL2 and APPL1; targets APPL2 to endosomes and acting in parallel to RAB5A. Interacts with S100A4. May interact with UBAP2. Interacts with PLEKHG4B; this interaction is required for PLEKHG4B localization to cell-cell adhesions. As to quaternary structure, (Microbial infection) Interacts with human cytomegalovirus (HCMV). (Microbial infection) Interacts with M.pneumoniae CARDS toxin; CARDS probably uses this protein as a receptor. A portion of internalized CARDS remains associated with intracellular annexin 2. Phosphorylation of Tyr-24 enhances heat stress-induced translocation to the cell surface. In terms of processing, ISGylated.

It is found in the secreted. It localises to the extracellular space. Its subcellular location is the extracellular matrix. The protein localises to the basement membrane. The protein resides in the melanosome. Calcium-regulated membrane-binding protein whose affinity for calcium is greatly enhanced by anionic phospholipids. It binds two calcium ions with high affinity. May be involved in heat-stress response. Inhibits PCSK9-enhanced LDLR degradation, probably reduces PCSK9 protein levels via a translational mechanism but also competes with LDLR for binding with PCSK9. Binds to endosomes damaged by phagocytosis of particulate wear debris and participates in endosomal membrane stabilization, thereby limiting NLRP3 inflammasome activation. Required for endothelial cell surface plasmin generation and may support fibrinolytic surveillance and neoangiogenesis. Functionally, (Microbial infection) Binds M.pneumoniae CARDS toxin, probably serves as one receptor for this pathogen. When ANXA2 is down-regulated by siRNA, less toxin binds to human cells and less vacuolization (a symptom of M.pneumoniae infection) is seen. This is Annexin A2 (ANXA2) from Homo sapiens (Human).